Consider the following 100-residue polypeptide: Small ribosomal subunit protein uS14c (100 aa).

The tract at residues 1–54 is disordered; that stretch reads MARKSLIQRERKRQKLEQKFHSIRRSSKKEISKVSSLSGKWEIHGKLQSPPRNS.

It belongs to the universal ribosomal protein uS14 family. As to quaternary structure, part of the 30S ribosomal subunit.

It is found in the plastid. It localises to the chloroplast. Functionally, binds 16S rRNA, required for the assembly of 30S particles. The protein is Small ribosomal subunit protein uS14c of Piper cenocladum (Ant piper).